A 313-amino-acid chain; its full sequence is Ribosomal RNA small subunit methyltransferase H (313 aa).

Residues Gly-35–His-37, Asp-55, Phe-79, Asp-101, and Gln-108 each bind S-adenosyl-L-methionine.

It belongs to the methyltransferase superfamily. RsmH family.

It is found in the cytoplasm. It carries out the reaction cytidine(1402) in 16S rRNA + S-adenosyl-L-methionine = N(4)-methylcytidine(1402) in 16S rRNA + S-adenosyl-L-homocysteine + H(+). Functionally, specifically methylates the N4 position of cytidine in position 1402 (C1402) of 16S rRNA. This Salmonella arizonae (strain ATCC BAA-731 / CDC346-86 / RSK2980) protein is Ribosomal RNA small subunit methyltransferase H.